The following is a 149-amino-acid chain: Oocyte-expressed protein homolog (149 aa).

Residues 1–22 (MVDDAGAAESQRGKQTPAHSLE) are disordered. Positions 49–110 (PLVFYLEAWL…RVQNRVKSML (62 aa)) constitute a KH; atypical domain.

The protein belongs to the KHDC1 family. In terms of assembly, component of the subcortical maternal complex (SCMC), at least composed of NLRP5, KHDC3L, OOEP, and TLE6 isoform 1. Within the complex, interacts with NLRP5, KHDC3L and TLE6 isoform 1. As part of the SCMC interacts with the SCMC-associated protein NLRP4F. The SCMC may facilitate translocation of its components between the nuclear and cytoplasmic compartments. Forms a scaffold complex with KHDC3L/FILIA, and interacts with BLM and TRIM25 at DNA replication forks.

The protein resides in the cytoplasm. It is found in the nucleus. Component of the subcortical maternal complex (SCMC), a multiprotein complex that plays a key role in early embryonic development. The SCMC complex is a structural constituent of cytoplasmic lattices, which consist in fibrous structures found in the cytoplasm of oocytes and preimplantation embryos. They are required to store maternal proteins critical for embryonic development, such as proteins that control epigenetic reprogramming of the preimplantation embryo, and prevent their degradation or activation. As part of the OOEP-KHDC3 scaffold, recruits BLM and TRIM25 to DNA replication forks, thereby promoting the ubiquitination of BLM by TRIM25, enhancing BLM retainment at replication forks and therefore promoting stalled replication fork restart. Positively regulates the homologous recombination-mediated DNA double-strand break (DSB) repair pathway by regulating ATM activation and RAD51 recruitment to DSBs in oocytes. Thereby contributes to oocyte survival and the resumption and completion of meiosis. The polypeptide is Oocyte-expressed protein homolog (Homo sapiens (Human)).